The primary structure comprises 253 residues: Imidazole glycerol phosphate synthase subunit HisF (253 aa).

Residues aspartate 11 and aspartate 130 contribute to the active site.

Belongs to the HisA/HisF family. As to quaternary structure, heterodimer of HisH and HisF.

Its subcellular location is the cytoplasm. The catalysed reaction is 5-[(5-phospho-1-deoxy-D-ribulos-1-ylimino)methylamino]-1-(5-phospho-beta-D-ribosyl)imidazole-4-carboxamide + L-glutamine = D-erythro-1-(imidazol-4-yl)glycerol 3-phosphate + 5-amino-1-(5-phospho-beta-D-ribosyl)imidazole-4-carboxamide + L-glutamate + H(+). It functions in the pathway amino-acid biosynthesis; L-histidine biosynthesis; L-histidine from 5-phospho-alpha-D-ribose 1-diphosphate: step 5/9. Its function is as follows. IGPS catalyzes the conversion of PRFAR and glutamine to IGP, AICAR and glutamate. The HisF subunit catalyzes the cyclization activity that produces IGP and AICAR from PRFAR using the ammonia provided by the HisH subunit. The sequence is that of Imidazole glycerol phosphate synthase subunit HisF from Thermotoga sp. (strain RQ2).